Consider the following 444-residue polypeptide: Protein kinase C and casein kinase substrate in neurons protein 1 (444 aa).

Serine 2 and serine 79 each carry phosphoserine. An F-BAR domain is found at glutamate 13 to aspartate 283. Positions lysine 26–isoleucine 275 form a coiled coil. Disordered regions lie at residues arginine 173–lysine 194 and leucine 309–lysine 386. Residue threonine 184 is modified to Phosphothreonine. Residues threonine 314 to glutamate 324 are compositionally biased toward basic and acidic residues. The span at threonine 329 to aspartate 351 shows a compositional bias: polar residues. Serine 346, serine 348, serine 349, serine 361, and serine 365 each carry phosphoserine. The SH3 domain maps to serine 385–isoleucine 444. At tyrosine 394 the chain carries Phosphotyrosine. A phosphoserine mark is found at serine 405 and serine 430.

It belongs to the PACSIN family. Homodimer. May form heterooligomers with other PACSINs. Interacts with both COBL and DBNL. Identified in a complex composed of COBL, PACSIN1 and WASL. Interacts (via SH3 domain) with SYNJ1 and WASL. Interacts (via SH3 domain) with DNM1; the interaction is reduced by DNM1 phosphorylation. Interacts with DNM2 and DNM3. Interacts with MAPT. Interacts with EHD1 and EHD3. Interacts with TRPV4. In terms of processing, phosphorylated by casein kinase 2 (CK2) and protein kinase C (PKC).

It localises to the cytoplasm. It is found in the cell projection. Its subcellular location is the synapse. The protein localises to the synaptosome. The protein resides in the ruffle membrane. It localises to the membrane. It is found in the cytoplasmic vesicle membrane. Its subcellular location is the cytosol. The protein localises to the cell membrane. Binds to membranes via its F-BAR domain and mediates membrane tubulation. Plays a role in the reorganization of the microtubule cytoskeleton via its interaction with MAPT; this decreases microtubule stability and inhibits MAPT-induced microtubule polymerization. Plays a role in cellular transport processes by recruiting DNM1, DNM2 and DNM3 to membranes. Plays a role in the reorganization of the actin cytoskeleton and in neuron morphogenesis via its interaction with COBL and WASL, and by recruiting COBL to the cell cortex. Plays a role in the regulation of neurite formation, neurite branching and the regulation of neurite length. Required for normal synaptic vesicle endocytosis; this process retrieves previously released neurotransmitters to accommodate multiple cycles of neurotransmission. Required for normal excitatory and inhibitory synaptic transmission. In Pongo abelii (Sumatran orangutan), this protein is Protein kinase C and casein kinase substrate in neurons protein 1 (Pacsin1).